The following is a 282-amino-acid chain: Phosphatidylserine decarboxylase proenzyme (282 aa).

Catalysis depends on charge relay system; for autoendoproteolytic cleavage activity residues Asp-88, His-144, and Ser-247. The active-site Schiff-base intermediate with substrate; via pyruvic acid; for decarboxylase activity is Ser-247. Ser-247 carries the pyruvic acid (Ser); by autocatalysis modification.

Belongs to the phosphatidylserine decarboxylase family. PSD-B subfamily. Prokaryotic type I sub-subfamily. As to quaternary structure, heterodimer of a large membrane-associated beta subunit and a small pyruvoyl-containing alpha subunit. The cofactor is pyruvate. Is synthesized initially as an inactive proenzyme. Formation of the active enzyme involves a self-maturation process in which the active site pyruvoyl group is generated from an internal serine residue via an autocatalytic post-translational modification. Two non-identical subunits are generated from the proenzyme in this reaction, and the pyruvate is formed at the N-terminus of the alpha chain, which is derived from the carboxyl end of the proenzyme. The autoendoproteolytic cleavage occurs by a canonical serine protease mechanism, in which the side chain hydroxyl group of the serine supplies its oxygen atom to form the C-terminus of the beta chain, while the remainder of the serine residue undergoes an oxidative deamination to produce ammonia and the pyruvoyl prosthetic group on the alpha chain. During this reaction, the Ser that is part of the protease active site of the proenzyme becomes the pyruvoyl prosthetic group, which constitutes an essential element of the active site of the mature decarboxylase.

It localises to the cell membrane. It carries out the reaction a 1,2-diacyl-sn-glycero-3-phospho-L-serine + H(+) = a 1,2-diacyl-sn-glycero-3-phosphoethanolamine + CO2. It participates in phospholipid metabolism; phosphatidylethanolamine biosynthesis; phosphatidylethanolamine from CDP-diacylglycerol: step 2/2. Functionally, catalyzes the formation of phosphatidylethanolamine (PtdEtn) from phosphatidylserine (PtdSer). In Xanthomonas oryzae pv. oryzae (strain MAFF 311018), this protein is Phosphatidylserine decarboxylase proenzyme.